A 1477-amino-acid polypeptide reads, in one-letter code: Inositol hexakisphosphate and diphosphoinositol-pentakisphosphate kinase 1 (1477 aa).

Positions 27–47 (TRGLGMRPEESDSELLEDEED) are disordered. Positions 37–47 (SDSELLEDEED) are enriched in acidic residues. 64 to 65 (KK) lines the substrate pocket. ATP is bound by residues Arg145, Lys198, His205, Arg224, 248 to 251 (EEFM), and 257 to 259 (DVK). Residue 224-225 (RK) coordinates substrate. Substrate-binding residues include Lys259 and Arg273. Residues Ser275, Asp320, and 332–334 (DVN) each bind ATP. 337–340 (SFVK) contributes to the substrate binding site. A polyphosphoinositide-binding domain region spans residues 382–453 (PTTSGTMMEL…VLDITRLLLA (72 aa)). The tract at residues 910 to 1016 (KGVEEEGSAP…PTEMKQSGLG (107 aa)) is disordered. 2 positions are modified to phosphoserine: Ser940 and Ser983. Over residues 1001 to 1016 (FSSSRPPTEMKQSGLG) the composition is skewed to polar residues. Ser1033, Ser1069, Ser1141, and Ser1148 each carry phosphoserine. 2 disordered regions span residues 1131-1248 (HSNQ…KPCQ) and 1438-1477 (REEV…SFSH). The segment covering 1164 to 1182 (SSGPSSTVSSAGPSSPTAV) has biased composition (low complexity). Residues 1446–1460 (CPPSNANPQSQSLAP) are compositionally biased toward polar residues.

The protein belongs to the histidine acid phosphatase family. VIP1 subfamily.

The protein localises to the cytoplasm. It localises to the cytosol. The protein resides in the cell membrane. It carries out the reaction 1D-myo-inositol hexakisphosphate + ATP = 1-diphospho-1D-myo-inositol 2,3,4,5,6-pentakisphosphate + ADP. The catalysed reaction is 5-diphospho-1D-myo-inositol 1,2,3,4,6-pentakisphosphate + ATP + H(+) = 1,5-bis(diphospho)-1D-myo-inositol 2,3,4,6-tetrakisphosphate + ADP. In terms of biological role, bifunctional inositol kinase that acts in concert with the IP6K kinases IP6K1, IP6K2 and IP6K3 to synthesize the diphosphate group-containing inositol pyrophosphates diphosphoinositol pentakisphosphate, PP-InsP5, and bis-diphosphoinositol tetrakisphosphate, (PP)2-InsP4. PP-InsP5 and (PP)2-InsP4, also respectively called InsP7 and InsP8, regulate a variety of cellular processes, including apoptosis, vesicle trafficking, cytoskeletal dynamics, exocytosis, insulin signaling and neutrophil activation. Phosphorylates inositol hexakisphosphate (InsP6) at position 1 to produce PP-InsP5 which is in turn phosphorylated by IP6Ks to produce (PP)2-InsP4. Alternatively, phosphorylates PP-InsP5 at position 1, produced by IP6Ks from InsP6, to produce (PP)2-InsP4. Activated when cells are exposed to hyperosmotic stress. This Bos taurus (Bovine) protein is Inositol hexakisphosphate and diphosphoinositol-pentakisphosphate kinase 1.